The chain runs to 37 residues: Ice-structuring protein 3 (37 aa).

The protein belongs to the type-I AFP family.

Functionally, contributes to protect fish blood from freezing at subzero sea water temperatures. Lowers the blood freezing point. Binds to nascent ice crystals and prevents further growth. In Pseudopleuronectes americanus (Winter flounder), this protein is Ice-structuring protein 3.